Here is a 360-residue protein sequence, read N- to C-terminus: Protein Wnt-2 (360 aa).

An N-terminal signal peptide occupies residues 1–25 (MNACLVGIWLWLPLLFTWLSPEVSS). 11 disulfides stabilise this stretch: Cys-76/Cys-87, Cys-127/Cys-135, Cys-137/Cys-157, Cys-206/Cys-220, Cys-208/Cys-215, Cys-278/Cys-309, Cys-294/Cys-304, Cys-308/Cys-348, Cys-324/Cys-339, Cys-326/Cys-336, and Cys-331/Cys-332. Residue Ser-212 is the site of O-palmitoleoyl serine; by PORCN attachment. The N-linked (GlcNAc...) asparagine glycan is linked to Asn-295.

The protein belongs to the Wnt family. In terms of processing, palmitoleoylation is required for efficient binding to frizzled receptors. Depalmitoleoylation leads to Wnt signaling pathway inhibition.

The protein resides in the secreted. It localises to the extracellular space. Its subcellular location is the extracellular matrix. In terms of biological role, ligand for members of the frizzled family of seven transmembrane receptors. Probable developmental protein. May be a signaling molecule which affects the development of discrete regions of tissues. Is likely to signal over only few cell diameters. The chain is Protein Wnt-2 (WNT2) from Muntiacus muntjak (Barking deer).